The following is a 283-amino-acid chain: Polyamine aminopropyltransferase (283 aa).

The 234-residue stretch at 3 to 236 (GIWFSELQTP…GLWAFSLGSK (234 aa)) folds into the PABS domain. Position 32 (glutamine 32) interacts with S-methyl-5'-thioadenosine. Spermidine contacts are provided by histidine 63 and aspartate 87. Residues glutamate 107 and 138-139 (DG) each bind S-methyl-5'-thioadenosine. The Proton acceptor role is filled by aspartate 156. 156–159 (DSTD) provides a ligand contact to spermidine. Proline 163 is a binding site for S-methyl-5'-thioadenosine.

This sequence belongs to the spermidine/spermine synthase family. In terms of assembly, homodimer or homotetramer.

It localises to the cytoplasm. The catalysed reaction is S-adenosyl 3-(methylsulfanyl)propylamine + putrescine = S-methyl-5'-thioadenosine + spermidine + H(+). Its pathway is amine and polyamine biosynthesis; spermidine biosynthesis; spermidine from putrescine: step 1/1. In terms of biological role, catalyzes the irreversible transfer of a propylamine group from the amino donor S-adenosylmethioninamine (decarboxy-AdoMet) to putrescine (1,4-diaminobutane) to yield spermidine. This chain is Polyamine aminopropyltransferase, found in Moorella thermoacetica (strain ATCC 39073 / JCM 9320).